Here is a 226-residue protein sequence, read N- to C-terminus: uncharacterized protein (226 aa).

Residues Thr-121 to Ile-163 are a coiled coil.

This is an uncharacterized protein from Methanocaldococcus jannaschii (strain ATCC 43067 / DSM 2661 / JAL-1 / JCM 10045 / NBRC 100440) (Methanococcus jannaschii).